A 373-amino-acid chain; its full sequence is Histidinol-phosphate aminotransferase (373 aa).

Residue lysine 229 is modified to N6-(pyridoxal phosphate)lysine.

The protein belongs to the class-II pyridoxal-phosphate-dependent aminotransferase family. Histidinol-phosphate aminotransferase subfamily. It depends on pyridoxal 5'-phosphate as a cofactor.

It carries out the reaction L-histidinol phosphate + 2-oxoglutarate = 3-(imidazol-4-yl)-2-oxopropyl phosphate + L-glutamate. The protein operates within amino-acid biosynthesis; L-histidine biosynthesis; L-histidine from 5-phospho-alpha-D-ribose 1-diphosphate: step 7/9. In Methanothermobacter thermautotrophicus (strain ATCC 29096 / DSM 1053 / JCM 10044 / NBRC 100330 / Delta H) (Methanobacterium thermoautotrophicum), this protein is Histidinol-phosphate aminotransferase (hisC).